The following is a 370-amino-acid chain: Quinolinate synthase (370 aa).

Iminosuccinate-binding residues include His-62 and Ser-83. Cys-128 serves as a coordination point for [4Fe-4S] cluster. Residues 154-156 and Ser-171 each bind iminosuccinate; that span reads YAN. Cys-215 serves as a coordination point for [4Fe-4S] cluster. Iminosuccinate is bound by residues 241–243 and Thr-258; that span reads HPE. Cys-312 contacts [4Fe-4S] cluster.

This sequence belongs to the quinolinate synthase family. Type 1 subfamily. It depends on [4Fe-4S] cluster as a cofactor.

The protein resides in the cytoplasm. The enzyme catalyses iminosuccinate + dihydroxyacetone phosphate = quinolinate + phosphate + 2 H2O + H(+). It participates in cofactor biosynthesis; NAD(+) biosynthesis; quinolinate from iminoaspartate: step 1/1. Functionally, catalyzes the condensation of iminoaspartate with dihydroxyacetone phosphate to form quinolinate. The sequence is that of Quinolinate synthase from Neisseria meningitidis serogroup C / serotype 2a (strain ATCC 700532 / DSM 15464 / FAM18).